The primary structure comprises 354 residues: S-adenosylmethionine:tRNA ribosyltransferase-isomerase (354 aa).

This sequence belongs to the QueA family. In terms of assembly, monomer.

It localises to the cytoplasm. The enzyme catalyses 7-aminomethyl-7-carbaguanosine(34) in tRNA + S-adenosyl-L-methionine = epoxyqueuosine(34) in tRNA + adenine + L-methionine + 2 H(+). The protein operates within tRNA modification; tRNA-queuosine biosynthesis. Functionally, transfers and isomerizes the ribose moiety from AdoMet to the 7-aminomethyl group of 7-deazaguanine (preQ1-tRNA) to give epoxyqueuosine (oQ-tRNA). The chain is S-adenosylmethionine:tRNA ribosyltransferase-isomerase from Salmonella dublin (strain CT_02021853).